We begin with the raw amino-acid sequence, 398 residues long: Phosphoglycerate kinase (398 aa).

Substrate contacts are provided by residues 23-25, Arg38, 61-64, Arg120, and Arg153; these read DLN and HFGR. ATP contacts are provided by residues Lys203, Glu325, and 355–358; that span reads GGDT.

The protein belongs to the phosphoglycerate kinase family. Monomer.

Its subcellular location is the cytoplasm. It carries out the reaction (2R)-3-phosphoglycerate + ATP = (2R)-3-phospho-glyceroyl phosphate + ADP. It functions in the pathway carbohydrate degradation; glycolysis; pyruvate from D-glyceraldehyde 3-phosphate: step 2/5. The sequence is that of Phosphoglycerate kinase from Mesorhizobium japonicum (strain LMG 29417 / CECT 9101 / MAFF 303099) (Mesorhizobium loti (strain MAFF 303099)).